A 205-amino-acid chain; its full sequence is Small ribosomal subunit protein uS4 (205 aa).

A disordered region spans residues 18–49; it reads NIWGRPKSPVNKREYGPGQHGQRRKGKLSDFG. Residues 94–157 form the S4 RNA-binding domain; that stretch reads RRLDAIVYRA…KQLALVLEAN (64 aa).

It belongs to the universal ribosomal protein uS4 family. Part of the 30S ribosomal subunit. Contacts protein S5. The interaction surface between S4 and S5 is involved in control of translational fidelity.

One of the primary rRNA binding proteins, it binds directly to 16S rRNA where it nucleates assembly of the body of the 30S subunit. Its function is as follows. With S5 and S12 plays an important role in translational accuracy. This is Small ribosomal subunit protein uS4 from Afipia carboxidovorans (strain ATCC 49405 / DSM 1227 / KCTC 32145 / OM5) (Oligotropha carboxidovorans).